The primary structure comprises 125 residues: Holo-[acyl-carrier-protein] synthase (125 aa).

Mg(2+) contacts are provided by aspartate 8 and glutamate 56.

Belongs to the P-Pant transferase superfamily. AcpS family. Mg(2+) serves as cofactor.

Its subcellular location is the cytoplasm. The catalysed reaction is apo-[ACP] + CoA = holo-[ACP] + adenosine 3',5'-bisphosphate + H(+). Transfers the 4'-phosphopantetheine moiety from coenzyme A to a Ser of acyl-carrier-protein. This is Holo-[acyl-carrier-protein] synthase from Borrelia hermsii (strain HS1 / DAH).